Consider the following 156-residue polypeptide: SsrA-binding protein (156 aa).

It belongs to the SmpB family.

The protein localises to the cytoplasm. In terms of biological role, required for rescue of stalled ribosomes mediated by trans-translation. Binds to transfer-messenger RNA (tmRNA), required for stable association of tmRNA with ribosomes. tmRNA and SmpB together mimic tRNA shape, replacing the anticodon stem-loop with SmpB. tmRNA is encoded by the ssrA gene; the 2 termini fold to resemble tRNA(Ala) and it encodes a 'tag peptide', a short internal open reading frame. During trans-translation Ala-aminoacylated tmRNA acts like a tRNA, entering the A-site of stalled ribosomes, displacing the stalled mRNA. The ribosome then switches to translate the ORF on the tmRNA; the nascent peptide is terminated with the 'tag peptide' encoded by the tmRNA and targeted for degradation. The ribosome is freed to recommence translation, which seems to be the essential function of trans-translation. The polypeptide is SsrA-binding protein (Clostridium tetani (strain Massachusetts / E88)).